The sequence spans 2773 residues: Peramine synthetase A (2773 aa).

The tract at residues 246–644 (FEDQVYSQPL…GRKDAQVKIR (399 aa)) is adenylation 1. The Carrier 1 domain maps to 774 to 850 (QPTCEMEERM…DLAKNCSQTL (77 aa)). Ser-811 carries the post-translational modification O-(pantetheine 4'-phosphoryl)serine. The tract at residues 888 to 1301 (QDAYPCTRLQ…MSSAEDLEQI (414 aa)) is condensation. An adenylation 2 region spans residues 1321–1720 (ADQVQARPDS…GRKDTQVKVR (400 aa)). Positions 1810-1949 (IGRDFVGWSS…IIQHLASLGS (140 aa)) are methylation (Met) domain. A disordered region spans residues 2250–2271 (MLSESLQQKAPPTARKRLPSTA). The region spanning 2267–2345 (LPSTAPERAM…HLLQTAAAGV (79 aa)) is the Carrier 2 domain. Ser-2304 carries the post-translational modification O-(pantetheine 4'-phosphoryl)serine. A thiesterase (TE) domain region spans residues 2397–2715 (TVVLTGANGF…LQDLADTARS (319 aa)).

The protein belongs to the NRP synthetase family. The cofactor is pantetheine 4'-phosphate.

It carries out the reaction (S)-1-pyrroline-5-carboxylate + L-arginine + S-adenosyl-L-methionine + 2 ATP = peramine + 2 AMP + S-adenosyl-L-homocysteine + 2 diphosphate + H2O + 2 H(+). Nonribosomal peptide synthetase involved in the biosynthesis of peramine, a pyrrolopyrazine synthesized in association with the grass host that protects the plant from insect herbivory. The single multifunctional NRPS perA seems to be responsible for all catalytic steps in the biosynthesis of peramine. The condensation domain of perA is proposed to catalyze formation of a peptide bond between 1-pyrroline-5-carboxylate and arginine. The methylation domain of perA would catalyze the N-methylation of the alpha-amino group of arginine. The reductase domain is proposed to be responsible for reduction of the thioester and the cyclization to form an iminium ion resulting in release from the peptide synthetase. Deprotonation of this intermediate and oxidation of the pyrroline ring would give rise to peramine. This final oxidation to give the pyrrole functionality may be spontaneous. This is Peramine synthetase A from Epichloe festucae (strain Fl1).